Consider the following 377-residue polypeptide: SH2/SH3 adapter protein NCK1 (377 aa).

The residue at position 2 (A2) is an N-acetylalanine. Positions 2–61 (AEEVVVVAKFDYVAQQEQELDIKKNERLWLLDDSKSWWRVRNSMNKTGFVPSNYVERKNS) constitute an SH3 1 domain. Residues S85, S89, S91, and S96 each carry the phosphoserine modification. Y105 carries the phosphotyrosine modification. The 60-residue stretch at 106 to 165 (DLNMPAYVKFNYMAEREDELSLIKGTKVIVMEKCSDGWWRGSYNGQVGWFPSNYVTEEGD) folds into the SH3 2 domain. S166 is modified (phosphoserine). The SH3 3 domain maps to 190-252 (QVLHVVQALY…PKNYVTVMQN (63 aa)). Residues 282-376 (WYYGKVTRHQ…GEKLYLVKHL (95 aa)) form the SH2 domain.

As to quaternary structure, interacts (via SH2 domain and SH3 domain 2) with EGFR. Interacts with PAK1 and SOS1. Interacts (via SH3 domains) with PKN2. Associates with BLNK, PLCG1, VAV1 and NCK1 in a B-cell antigen receptor-dependent fashion. Interacts with SOCS7. This interaction is required for nuclear import. Part of a complex containing PPP1R15B, PP1 and NCK1. Interacts with RALGPS1. Interacts with CAV2 (tyrosine phosphorylated form). Interacts with ADAM15. Interacts with FASLG. Directly interacts with RASA1. Interacts with isoform 4 of MINK1. Interacts with FLT1 (tyrosine phosphorylated). Interacts with KDR (tyrosine phosphorylated). Interacts (via SH2 domain) with EPHB1; activates the JUN cascade to regulate cell adhesion. Interacts with EPHA2. Interacts (via SH2 domain) with PDGFRB (tyrosine phosphorylated). Interacts with the inactive form of EIF2AK2/PKR. Interacts with PTPN1. Interacts with INSR/insulin receptor (in response to insulin stimulation); This interaction may mediate PTPN1 recruitment leading to INSR dephosphorylation. Interacts with IRS1. Phosphorylated on Ser and Tyr residues. Phosphorylated in response to activation of EGFR and FcERI. Phosphorylated by activated PDGFRB.

The protein resides in the cytoplasm. The protein localises to the endoplasmic reticulum. Its subcellular location is the nucleus. Its function is as follows. Adapter protein which associates with tyrosine-phosphorylated growth factor receptors, such as KDR and PDGFRB, or their cellular substrates. Maintains low levels of EIF2S1 phosphorylation by promoting its dephosphorylation by PP1. Plays a role in the DNA damage response, not in the detection of the damage by ATM/ATR, but for efficient activation of downstream effectors, such as that of CHEK2. Plays a role in ELK1-dependent transcriptional activation in response to activated Ras signaling. Modulates the activation of EIF2AK2/PKR by dsRNA. May play a role in cell adhesion and migration through interaction with ephrin receptors. In Homo sapiens (Human), this protein is SH2/SH3 adapter protein NCK1 (NCK1).